The sequence spans 822 residues: MAAAVVVAEGDSDSRPGQELLVAWNTVSTGLVPPAALGLVSSRTSGAVPPKEEELRAAVEVLRGHGLHSVLEEWFVEVLQNDLQANISPEFWNAISQCENSADEPQCLLLLLDAFGLLESRLDPYLRSLELLEKWTRLGLLMGTGAQGLREEVHTMLRGVLFFSTPRTFQEMIQRLYGCFLRVYMQSKRKGEGGTDPELEGELDSRYARRRYYRLLQSPLCAGCSSDKQQCWCRQALEQFHQLSQVLHRLSLLERVSAEAVTTTLHQVTRERMEDRCRGEYERSFLREFHKWIERVVGWLGKVFLQDGPARPASPEAGNTLRRWRCHVQRFFYRIYASLRIEELFSIVRDFPDSRPAIEDLKYCLERTDQRQQLLVSLKAALETRLLHPGVNTCDIITLYISAIKALRVLDPSMVILEVACEPIRRYLRTREDTVRQIVAGLTGDSDGTGDLAVELSKTDPASLETGQDSEDDSGEPEDWVPDPVDADPGKSSSKRRSSDIISLLVSIYGSKDLFINEYRSLLADRLLHQFSFSPEREIRNVELLKLRFGEAPMHFCEVMLKDMADSRRINANIREEDEKRPAEEQPPFGVYAVILSSEFWPPFKDEKLEVPEDIRAALEAYCKKYEQLKAMRTLSWKHTLGLVTMDVELADRTLSVAVTPVQAVILLYFQDQASWTLEELSKAVKMPVALLRRRMSVWLQQGVLREEPPGTFSVIEEERPQDRDNMVLIDSDDESDSGMASQADQKEEELLLFWTYIQAMLTNLESLSLDRIYNMLRMFVVTGPALAEIDLQELQGYLQKKVRDQQLVYSAGVYRLPKNCS.

Phosphoserine is present on residues Ser-218, Ser-314, Ser-470, Ser-534, and Ser-697. The segment at 450-495 is disordered; sequence GDLAVELSKTDPASLETGQDSEDDSGEPEDWVPDPVDADPGKSSSK. Positions 468-481 are enriched in acidic residues; sequence QDSEDDSGEPEDWV. The tract at residues 502-700 is cullin homology; that stretch reads ISLLVSIYGS…LLRRRMSVWL (199 aa). Tyr-810 carries the post-translational modification Phosphotyrosine.

This sequence belongs to the cullin family. As to quaternary structure, the mammalian APC/C is composed at least of 14 distinct subunits ANAPC1, ANAPC2, CDC27/APC3, ANAPC4, ANAPC5, CDC16/APC6, ANAPC7, CDC23/APC8, ANAPC10, ANAPC11, CDC26/APC12, ANAPC13, ANAPC15 and ANAPC16 that assemble into a complex of at least 19 chains with a combined molecular mass of around 1.2 MDa; APC/C interacts with FZR1 and FBXO5. In the context of the APC/C complex, directly interacts with UBE2C and UBE2S. Interacts (via cullin domain) with ANAPC11 and with UBCH10. Interacts with NEUROD2. Interacts with FBXO43; the interaction is direct.

Its pathway is protein modification; protein ubiquitination. Together with the RING-H2 protein ANAPC11, constitutes the catalytic component of the anaphase promoting complex/cyclosome (APC/C), a cell cycle-regulated E3 ubiquitin ligase that controls progression through mitosis and the G1 phase of the cell cycle. The APC/C complex acts by mediating ubiquitination and subsequent degradation of target proteins: it mainly mediates the formation of 'Lys-11'-linked polyubiquitin chains and, to a lower extent, the formation of 'Lys-48'- and 'Lys-63'-linked polyubiquitin chains. The APC/C complex catalyzes assembly of branched 'Lys-11'-/'Lys-48'-linked branched ubiquitin chains on target proteins. The CDC20-APC/C complex positively regulates the formation of synaptic vesicle clustering at active zone to the presynaptic membrane in postmitotic neurons. CDC20-APC/C-induced degradation of NEUROD2 drives presynaptic differentiation. This is Anaphase-promoting complex subunit 2 (ANAPC2) from Homo sapiens (Human).